We begin with the raw amino-acid sequence, 221 residues long: Glutathione peroxidase 6 (221 aa).

The first 19 residues, 1 to 19 (MAQKLWGSCLFSLFMAALA), serve as a signal peptide directing secretion. Cys73 is a catalytic residue.

It belongs to the glutathione peroxidase family.

The protein resides in the secreted. It carries out the reaction 2 glutathione + H2O2 = glutathione disulfide + 2 H2O. In Mus musculus (Mouse), this protein is Glutathione peroxidase 6 (Gpx6).